We begin with the raw amino-acid sequence, 327 residues long: Beta-ketoacyl-[acyl-carrier-protein] synthase III (327 aa).

Catalysis depends on residues Cys114 and His254. Positions Gln255–Arg259 are ACP-binding. Asn284 is a catalytic residue.

This sequence belongs to the thiolase-like superfamily. FabH family. In terms of assembly, homodimer.

The protein localises to the cytoplasm. It catalyses the reaction malonyl-[ACP] + acetyl-CoA + H(+) = 3-oxobutanoyl-[ACP] + CO2 + CoA. It functions in the pathway lipid metabolism; fatty acid biosynthesis. In terms of biological role, catalyzes the condensation reaction of fatty acid synthesis by the addition to an acyl acceptor of two carbons from malonyl-ACP. Catalyzes the first condensation reaction which initiates fatty acid synthesis and may therefore play a role in governing the total rate of fatty acid production. Possesses both acetoacetyl-ACP synthase and acetyl transacylase activities. Its substrate specificity determines the biosynthesis of branched-chain and/or straight-chain of fatty acids. This Levilactobacillus brevis (strain ATCC 367 / BCRC 12310 / CIP 105137 / JCM 1170 / LMG 11437 / NCIMB 947 / NCTC 947) (Lactobacillus brevis) protein is Beta-ketoacyl-[acyl-carrier-protein] synthase III.